A 734-amino-acid polypeptide reads, in one-letter code: Transcription factor EMB1444 (734 aa).

Residues 537–566 (QFPTSLEIPKKNKKRAKPGESSRPRPRDRQ) are disordered. The short motif at 548 to 555 (NKKRAKPG) is the Nuclear localization signal element. The bHLH domain maps to 552 to 601 (AKPGESSRPRPRDRQLIQDRIKELRELVPNGSKCSIDSLLECTIKHMLFL). The span at 553-566 (KPGESSRPRPRDRQ) shows a compositional bias: basic and acidic residues.

Belongs to the bHLH protein family. LHW subfamily. Homodimer.

It localises to the nucleus. In terms of biological role, transcription factor that may regulate root development. This is Transcription factor EMB1444 from Arabidopsis thaliana (Mouse-ear cress).